We begin with the raw amino-acid sequence, 186 residues long: Probable chorismate pyruvate-lyase (186 aa).

Substrate-binding residues include Arg-80, Leu-118, and Glu-170.

The protein belongs to the UbiC family.

The protein localises to the cytoplasm. The catalysed reaction is chorismate = 4-hydroxybenzoate + pyruvate. Its pathway is cofactor biosynthesis; ubiquinone biosynthesis. Removes the pyruvyl group from chorismate, with concomitant aromatization of the ring, to provide 4-hydroxybenzoate (4HB) for the ubiquinone pathway. This chain is Probable chorismate pyruvate-lyase, found in Pseudomonas syringae pv. tomato (strain ATCC BAA-871 / DC3000).